A 172-amino-acid polypeptide reads, in one-letter code: Adenine phosphoribosyltransferase (172 aa).

This sequence belongs to the purine/pyrimidine phosphoribosyltransferase family. As to quaternary structure, homodimer.

The protein resides in the cytoplasm. It catalyses the reaction AMP + diphosphate = 5-phospho-alpha-D-ribose 1-diphosphate + adenine. It participates in purine metabolism; AMP biosynthesis via salvage pathway; AMP from adenine: step 1/1. Its function is as follows. Catalyzes a salvage reaction resulting in the formation of AMP, that is energically less costly than de novo synthesis. This Prochlorococcus marinus (strain MIT 9303) protein is Adenine phosphoribosyltransferase.